The primary structure comprises 435 residues: Aspartate--tRNA(Asp/Asn) ligase (435 aa).

Glu163 is a binding site for L-aspartate. The segment at 185-188 (QLYK) is aspartate. L-aspartate is bound at residue Arg206. Residues 206–208 (RAE), 214–216 (RHL), and Glu358 contribute to the ATP site. Residues Ser361 and Arg365 each coordinate L-aspartate. 406–409 (GAER) is a binding site for ATP.

It belongs to the class-II aminoacyl-tRNA synthetase family. Type 2 subfamily. Homodimer.

It is found in the cytoplasm. The catalysed reaction is tRNA(Asx) + L-aspartate + ATP = L-aspartyl-tRNA(Asx) + AMP + diphosphate. Its function is as follows. Aspartyl-tRNA synthetase with relaxed tRNA specificity since it is able to aspartylate not only its cognate tRNA(Asp) but also tRNA(Asn). Reaction proceeds in two steps: L-aspartate is first activated by ATP to form Asp-AMP and then transferred to the acceptor end of tRNA(Asp/Asn). Is slightly more efficient at aminoacylating tRNA(Asn) over tRNA(Asp). The protein is Aspartate--tRNA(Asp/Asn) ligase (aspS2) of Deinococcus radiodurans (strain ATCC 13939 / DSM 20539 / JCM 16871 / CCUG 27074 / LMG 4051 / NBRC 15346 / NCIMB 9279 / VKM B-1422 / R1).